Here is a 181-residue protein sequence, read N- to C-terminus: Keratin-associated protein 4-5 (181 aa).

Repeat copies occupy residues 5–9 (CCGSV), 20–24 (CCRPS), 25–29 (CCQTT), 30–34 (CCRTT), 35–39 (CCRPS), 40–44 (CCKPQ), 45–49 (CCQSV), 55–59 (CCHPS), 60–64 (CCISS), 65–69 (CCRPY), 70–74 (CCESS), 75–79 (CCRPC), 80–84 (CCQTT), 85–89 (CCRTT), 90–94 (CCRTT), 95–99 (CCCPS), 100–104 (CCVSS), 105–109 (CCRPQ), 110–114 (CCQSV), 115–119 (CCQPT), 120–124 (CCRPS), 125–129 (CCISS), 130–134 (CCHPS), 135–139 (CCESS), 140–144 (CCRPC), and 145–149 (CCVRP). Residues 5 to 154 (CCGSVSSEQS…CCVRPVCGRV (150 aa)) form a 26 X 5 AA repeats of C-C-[GRQVCHIEK]-[SPTR]-[VSTQYC] region.

Belongs to the KRTAP type 4 family. As to quaternary structure, interacts with hair keratins. In terms of tissue distribution, expressed in the hair follicles.

In the hair cortex, hair keratin intermediate filaments are embedded in an interfilamentous matrix, consisting of hair keratin-associated proteins (KRTAP), which are essential for the formation of a rigid and resistant hair shaft through their extensive disulfide bond cross-linking with abundant cysteine residues of hair keratins. The matrix proteins include the high-sulfur and high-glycine-tyrosine keratins. This chain is Keratin-associated protein 4-5 (KRTAP4-5), found in Homo sapiens (Human).